Here is a 206-residue protein sequence, read N- to C-terminus: Peptidyl-tRNA hydrolase (206 aa).

Residue Tyr14 participates in tRNA binding. The active-site Proton acceptor is His19. Positions 64 and 66 each coordinate tRNA. A disordered region spans residues 182 to 206; that stretch reads FNQKNKKKKEKEQPEAATDQLLENK.

The protein belongs to the PTH family. In terms of assembly, monomer.

It is found in the cytoplasm. The enzyme catalyses an N-acyl-L-alpha-aminoacyl-tRNA + H2O = an N-acyl-L-amino acid + a tRNA + H(+). Its function is as follows. Hydrolyzes ribosome-free peptidyl-tRNAs (with 1 or more amino acids incorporated), which drop off the ribosome during protein synthesis, or as a result of ribosome stalling. In terms of biological role, catalyzes the release of premature peptidyl moieties from peptidyl-tRNA molecules trapped in stalled 50S ribosomal subunits, and thus maintains levels of free tRNAs and 50S ribosomes. This is Peptidyl-tRNA hydrolase from Desulforamulus reducens (strain ATCC BAA-1160 / DSM 100696 / MI-1) (Desulfotomaculum reducens).